We begin with the raw amino-acid sequence, 298 residues long: Lipoyl synthase (298 aa).

[4Fe-4S] cluster contacts are provided by Cys-40, Cys-45, Cys-51, Cys-67, Cys-71, Cys-74, and Ser-280. The region spanning 53–269 is the Radical SAM core domain; it reads AVRRTATFMI…KEIAMQKGFS (217 aa).

This sequence belongs to the radical SAM superfamily. Lipoyl synthase family. [4Fe-4S] cluster serves as cofactor.

The protein localises to the cytoplasm. It catalyses the reaction [[Fe-S] cluster scaffold protein carrying a second [4Fe-4S](2+) cluster] + N(6)-octanoyl-L-lysyl-[protein] + 2 oxidized [2Fe-2S]-[ferredoxin] + 2 S-adenosyl-L-methionine + 4 H(+) = [[Fe-S] cluster scaffold protein] + N(6)-[(R)-dihydrolipoyl]-L-lysyl-[protein] + 4 Fe(3+) + 2 hydrogen sulfide + 2 5'-deoxyadenosine + 2 L-methionine + 2 reduced [2Fe-2S]-[ferredoxin]. It participates in protein modification; protein lipoylation via endogenous pathway; protein N(6)-(lipoyl)lysine from octanoyl-[acyl-carrier-protein]. In terms of biological role, catalyzes the radical-mediated insertion of two sulfur atoms into the C-6 and C-8 positions of the octanoyl moiety bound to the lipoyl domains of lipoate-dependent enzymes, thereby converting the octanoylated domains into lipoylated derivatives. The protein is Lipoyl synthase of Bacillus velezensis (strain DSM 23117 / BGSC 10A6 / LMG 26770 / FZB42) (Bacillus amyloliquefaciens subsp. plantarum).